Consider the following 748-residue polypeptide: Catalase-peroxidase (748 aa).

A cross-link (tryptophyl-tyrosyl-methioninium (Trp-Tyr) (with M-262)) is located at residues 91-236 (WHSAGTYRVG…LAAVQMGLIY (146 aa)). The Proton acceptor role is filled by His-92. Residues 201-223 (AQPVADKAGHGKEHGRTDGGRNL) are disordered. Residues 207 to 221 (KAGHGKEHGRTDGGR) show a composition bias toward basic and acidic residues. A cross-link (tryptophyl-tyrosyl-methioninium (Tyr-Met) (with W-91)) is located at residues 236-262 (YVNPEGPDGNPDPQASAHDIRETFARM). His-277 is a binding site for heme b.

The protein belongs to the peroxidase family. Peroxidase/catalase subfamily. In terms of assembly, homodimer or homotetramer. Heme b is required as a cofactor. Post-translationally, formation of the three residue Trp-Tyr-Met cross-link is important for the catalase, but not the peroxidase activity of the enzyme.

The catalysed reaction is H2O2 + AH2 = A + 2 H2O. The enzyme catalyses 2 H2O2 = O2 + 2 H2O. In terms of biological role, bifunctional enzyme with both catalase and broad-spectrum peroxidase activity. This is Catalase-peroxidase from Bordetella avium (strain 197N).